We begin with the raw amino-acid sequence, 259 residues long: Ribosomal RNA small subunit methyltransferase A (259 aa).

S-adenosyl-L-methionine-binding residues include Asn-13, Thr-15, Gly-40, Glu-61, Asp-85, and Asn-105.

It belongs to the class I-like SAM-binding methyltransferase superfamily. rRNA adenine N(6)-methyltransferase family. RsmA subfamily.

The protein localises to the cytoplasm. It carries out the reaction adenosine(1518)/adenosine(1519) in 16S rRNA + 4 S-adenosyl-L-methionine = N(6)-dimethyladenosine(1518)/N(6)-dimethyladenosine(1519) in 16S rRNA + 4 S-adenosyl-L-homocysteine + 4 H(+). Functionally, specifically dimethylates two adjacent adenosines (A1518 and A1519) in the loop of a conserved hairpin near the 3'-end of 16S rRNA in the 30S particle. May play a critical role in biogenesis of 30S subunits. In Mycoplasma genitalium (strain ATCC 33530 / DSM 19775 / NCTC 10195 / G37) (Mycoplasmoides genitalium), this protein is Ribosomal RNA small subunit methyltransferase A.